An 85-amino-acid chain; its full sequence is uncharacterized protein (85 aa).

Disordered regions lie at residues 1 to 28 (MPQKPLKVTKKAKDPRRVTKKQKNLRKA) and 35 to 54 (SKKKSLQHLKKLKKSSSLTE). Over residues 35 to 48 (SKKKSLQHLKKLKK) the composition is skewed to basic residues.

Its subcellular location is the nucleus. This is an uncharacterized protein from Saccharomyces cerevisiae (strain ATCC 204508 / S288c) (Baker's yeast).